Reading from the N-terminus, the 107-residue chain is Toxin MT2730 (107 aa).

Positions 1 to 42 (MTHKRTKRQPAIAAGLNAPRRNRVGRQHGWPADVPSAEQRRA) are disordered.

In terms of biological role, toxic component of a type II toxin-antitoxin (TA) system. Its toxic effect is neutralized by coexpression with cognate antitoxin MT2731. This chain is Toxin MT2730, found in Mycobacterium tuberculosis (strain CDC 1551 / Oshkosh).